Consider the following 149-residue polypeptide: UPF0260 protein PSPPH_1551 (149 aa).

Belongs to the UPF0260 family.

The polypeptide is UPF0260 protein PSPPH_1551 (Pseudomonas savastanoi pv. phaseolicola (strain 1448A / Race 6) (Pseudomonas syringae pv. phaseolicola (strain 1448A / Race 6))).